A 234-amino-acid polypeptide reads, in one-letter code: 5'-methylthioadenosine/S-adenosylhomocysteine nucleosidase (234 aa).

Residue Glu12 is the Proton acceptor of the active site. Residues Gly78, Ile152, and 173–174 (ME) contribute to the substrate site. Asp197 (proton donor) is an active-site residue.

It belongs to the PNP/UDP phosphorylase family. MtnN subfamily.

The catalysed reaction is S-adenosyl-L-homocysteine + H2O = S-(5-deoxy-D-ribos-5-yl)-L-homocysteine + adenine. The enzyme catalyses S-methyl-5'-thioadenosine + H2O = 5-(methylsulfanyl)-D-ribose + adenine. It carries out the reaction 5'-deoxyadenosine + H2O = 5-deoxy-D-ribose + adenine. It participates in amino-acid biosynthesis; L-methionine biosynthesis via salvage pathway; S-methyl-5-thio-alpha-D-ribose 1-phosphate from S-methyl-5'-thioadenosine (hydrolase route): step 1/2. Catalyzes the irreversible cleavage of the glycosidic bond in both 5'-methylthioadenosine (MTA) and S-adenosylhomocysteine (SAH/AdoHcy) to adenine and the corresponding thioribose, 5'-methylthioribose and S-ribosylhomocysteine, respectively. Also cleaves 5'-deoxyadenosine, a toxic by-product of radical S-adenosylmethionine (SAM) enzymes, into 5-deoxyribose and adenine. In Desulfotalea psychrophila (strain LSv54 / DSM 12343), this protein is 5'-methylthioadenosine/S-adenosylhomocysteine nucleosidase.